Reading from the N-terminus, the 269-residue chain is Formamidopyrimidine-DNA glycosylase (269 aa).

Pro2 acts as the Schiff-base intermediate with DNA in catalysis. Residue Glu3 is the Proton donor of the active site. Lys57 acts as the Proton donor; for beta-elimination activity in catalysis. His90, Arg109, and Lys150 together coordinate DNA. Residues 235 to 269 (RVYGRNGEPCRTCGTPIETAKHGQRSTFFCRRCQK) form an FPG-type zinc finger. Arg259 serves as the catalytic Proton donor; for delta-elimination activity.

The protein belongs to the FPG family. As to quaternary structure, monomer. Zn(2+) is required as a cofactor.

The enzyme catalyses Hydrolysis of DNA containing ring-opened 7-methylguanine residues, releasing 2,6-diamino-4-hydroxy-5-(N-methyl)formamidopyrimidine.. It carries out the reaction 2'-deoxyribonucleotide-(2'-deoxyribose 5'-phosphate)-2'-deoxyribonucleotide-DNA = a 3'-end 2'-deoxyribonucleotide-(2,3-dehydro-2,3-deoxyribose 5'-phosphate)-DNA + a 5'-end 5'-phospho-2'-deoxyribonucleoside-DNA + H(+). In terms of biological role, involved in base excision repair of DNA damaged by oxidation or by mutagenic agents. Acts as a DNA glycosylase that recognizes and removes damaged bases. Has a preference for oxidized purines, such as 7,8-dihydro-8-oxoguanine (8-oxoG). Has AP (apurinic/apyrimidinic) lyase activity and introduces nicks in the DNA strand. Cleaves the DNA backbone by beta-delta elimination to generate a single-strand break at the site of the removed base with both 3'- and 5'-phosphates. The polypeptide is Formamidopyrimidine-DNA glycosylase (Pectobacterium carotovorum subsp. carotovorum (strain PC1)).